We begin with the raw amino-acid sequence, 251 residues long: Imidazole glycerol phosphate synthase subunit HisF (251 aa).

Residues Asp11 and Asp130 contribute to the active site.

The protein belongs to the HisA/HisF family. As to quaternary structure, heterodimer of HisH and HisF.

Its subcellular location is the cytoplasm. The catalysed reaction is 5-[(5-phospho-1-deoxy-D-ribulos-1-ylimino)methylamino]-1-(5-phospho-beta-D-ribosyl)imidazole-4-carboxamide + L-glutamine = D-erythro-1-(imidazol-4-yl)glycerol 3-phosphate + 5-amino-1-(5-phospho-beta-D-ribosyl)imidazole-4-carboxamide + L-glutamate + H(+). It participates in amino-acid biosynthesis; L-histidine biosynthesis; L-histidine from 5-phospho-alpha-D-ribose 1-diphosphate: step 5/9. Its function is as follows. IGPS catalyzes the conversion of PRFAR and glutamine to IGP, AICAR and glutamate. The HisF subunit catalyzes the cyclization activity that produces IGP and AICAR from PRFAR using the ammonia provided by the HisH subunit. The sequence is that of Imidazole glycerol phosphate synthase subunit HisF from Prosthecochloris aestuarii (strain DSM 271 / SK 413).